The primary structure comprises 367 residues: Phthiodiolone/phenolphthiodiolone dimycocerosates ketoreductase (367 aa).

The protein belongs to the mer family. Phthiodiolone/phenolphthiodiolone dimycocerosates ketoreductase subfamily.

Catalyzes the reduction of the keto moiety of phthiodiolone dimycocerosates (DIM B) and glycosylated phenolphthiodiolone dimycocerosates to form the intermediate compounds phthiotriol and glycosylated phenolphthiotriol dimycocerosates during phthiocerol dimycocerosates (DIM A) and glycosylated phenolphthiocerol dimycocerosates (PGL) biosynthesis. This chain is Phthiodiolone/phenolphthiodiolone dimycocerosates ketoreductase, found in Mycobacterium kansasii.